A 329-amino-acid polypeptide reads, in one-letter code: Beta-ketoacyl-[acyl-carrier-protein] synthase III (329 aa).

Active-site residues include C123 and H256. Residues 257–261 are ACP-binding; it reads QANIR. Residue N286 is part of the active site.

Belongs to the thiolase-like superfamily. FabH family. In terms of assembly, homodimer.

It localises to the cytoplasm. It catalyses the reaction malonyl-[ACP] + acetyl-CoA + H(+) = 3-oxobutanoyl-[ACP] + CO2 + CoA. Its pathway is lipid metabolism; fatty acid biosynthesis. Its function is as follows. Catalyzes the condensation reaction of fatty acid synthesis by the addition to an acyl acceptor of two carbons from malonyl-ACP. Catalyzes the first condensation reaction which initiates fatty acid synthesis and may therefore play a role in governing the total rate of fatty acid production. Possesses both acetoacetyl-ACP synthase and acetyl transacylase activities. Its substrate specificity determines the biosynthesis of branched-chain and/or straight-chain of fatty acids. The polypeptide is Beta-ketoacyl-[acyl-carrier-protein] synthase III (Burkholderia cenocepacia (strain HI2424)).